The chain runs to 456 residues: Phospholipase A1 member A (456 aa).

Positions 1–25 are cleaved as a signal peptide; that stretch reads MPPGPWESCFWVGGLLLWLSVGSSG. Serine 166 functions as the Nucleophile in the catalytic mechanism. The Charge relay system role is filled by aspartate 190. Cysteine 245 and cysteine 258 are joined by a disulfide. Catalysis depends on histidine 260, which acts as the Charge relay system. 2 disulfide bridges follow: cysteine 282–cysteine 293 and cysteine 296–cysteine 304. N-linked (GlcNAc...) asparagine glycosylation occurs at asparagine 365.

The protein belongs to the AB hydrolase superfamily. Lipase family.

The protein localises to the secreted. The catalysed reaction is a 1,2-diacyl-sn-glycero-3-phospho-L-serine + H2O = a 2-acyl-sn-glycero-3-phospho-L-serine + a fatty acid + H(+). It catalyses the reaction 1,2-di-(9Z)-octadecenoyl-sn-glycero-3-phospho-L-serine + H2O = 2-(9Z-octadecenoyl)-sn-glycero-3-phospho-L-serine + (9Z)-octadecenoate + H(+). The enzyme catalyses 1-hexadecanoyl-2-(5Z,8Z,11Z,14Z-eicosatetraenoyl)-sn-glycero-3-phospho-L-serine + H2O = 2-(5Z,8Z,11Z,14Z)-eicosatetraenoyl-sn-glycero-3-phospho-L-serine + hexadecanoate + H(+). It carries out the reaction a 1-acyl-sn-glycero-3-phospho-L-serine + H2O = sn-glycero-3-phospho-L-serine + a fatty acid + H(+). The catalysed reaction is 1-(9Z-octadecenoyl)-sn-glycero-3-phospho-L-serine + H2O = sn-glycero-3-phospho-L-serine + (9Z)-octadecenoate + H(+). In terms of biological role, hydrolyzes the ester bond of the acyl group attached at the sn-1 position of phosphatidylserines (phospholipase A1 activity) and 1-acyl-2-lysophosphatidylserines (lysophospholipase activity) in the pathway of phosphatidylserines acyl chain remodeling. Cleaves phosphatidylserines exposed on the outer leaflet of the plasma membrane of apoptotic cells producing 2-acyl-1-lysophosphatidylserines, which in turn enhance mast cell activation and histamine production. Has no activity toward other glycerophospholipids including phosphatidylcholines, phosphatidylethanolamines, phosphatidic acids or phosphatidylinositols, or glycerolipids such as triolein. The polypeptide is Phospholipase A1 member A (PLA1A) (Pongo abelii (Sumatran orangutan)).